Consider the following 199-residue polypeptide: NAD(P)H dehydrogenase (quinone) (199 aa).

The Flavodoxin-like domain maps to 4-190 (ILVLYYSMYG…AIARFQGEHV (187 aa)). Residues 10-15 (SMYGHI) and 79-81 (TRF) each bind FMN. Residue Tyr-12 participates in NAD(+) binding. Residue Trp-99 participates in substrate binding. Residues 114–119 (STGTGG) and His-134 each bind FMN.

The protein belongs to the WrbA family. The cofactor is FMN.

The catalysed reaction is a quinone + NADH + H(+) = a quinol + NAD(+). It carries out the reaction a quinone + NADPH + H(+) = a quinol + NADP(+). In Yersinia pseudotuberculosis serotype O:1b (strain IP 31758), this protein is NAD(P)H dehydrogenase (quinone).